The following is a 409-amino-acid chain: Elongation factor Tu, chloroplastic (409 aa).

Positions 10–214 constitute a tr-type G domain; that stretch reads KPHVNIGTIG…AVDAYIPTPE (205 aa). Residues 19 to 26 form a G1 region; that stretch reads GHVDHGKT. 19 to 26 is a GTP binding site; sequence GHVDHGKT. Threonine 26 contributes to the Mg(2+) binding site. Residues 60–64 are G2; sequence GITIN. The tract at residues 81 to 84 is G3; it reads DCPG. GTP contacts are provided by residues 81–85 and 136–139; these read DCPGH and NKQD. The interval 136–139 is G4; the sequence is NKQD. The interval 174 to 176 is G5; the sequence is SAL.

Belongs to the TRAFAC class translation factor GTPase superfamily. Classic translation factor GTPase family. EF-Tu/EF-1A subfamily.

The protein localises to the plastid. Its subcellular location is the chloroplast. It catalyses the reaction GTP + H2O = GDP + phosphate + H(+). In terms of biological role, GTP hydrolase that promotes the GTP-dependent binding of aminoacyl-tRNA to the A-site of ribosomes during protein biosynthesis. The chain is Elongation factor Tu, chloroplastic (tufA) from Thalassiosira pseudonana (Marine diatom).